The chain runs to 279 residues: Energy-coupling factor transporter ATP-binding protein EcfA (279 aa).

An ABC transporter domain is found at 5–240; the sequence is IELEKINYKY…GPELIDLGLD (236 aa). 40-47 provides a ligand contact to ATP; sequence GHNGSGKS.

The protein belongs to the ABC transporter superfamily. Energy-coupling factor EcfA family. As to quaternary structure, forms a stable energy-coupling factor (ECF) transporter complex composed of 2 membrane-embedded substrate-binding proteins (S component), 2 ATP-binding proteins (A component) and 2 transmembrane proteins (T component).

It is found in the cell membrane. Its function is as follows. ATP-binding (A) component of a common energy-coupling factor (ECF) ABC-transporter complex. Unlike classic ABC transporters this ECF transporter provides the energy necessary to transport a number of different substrates. The polypeptide is Energy-coupling factor transporter ATP-binding protein EcfA (Enterococcus faecium (Streptococcus faecium)).